The chain runs to 62 residues: Snaclec aspercetin subunit beta (62 aa).

A disulfide bridge connects residues Cys2 and Cys13. The C-type lectin domain occupies Tyr9 to Gly62.

This sequence belongs to the snaclec family. Heterodimer; disulfide-linked. Expressed by the venom gland.

The protein localises to the secreted. Snaclec that binds to von Willebrand factor (VWF) and induces its interaction with GPIbalpha (GP1BA) (via the vWF A1 domain), resulting in platelet aggregation. Intramuscular and intravenous injections in mice induce a dose-dependent drop in platelet count (thrombocytopenia). Pretreatment by intravenous injection by this protein in mice potentiates the hemorrhagic lesion in the skin provoked by the metalloproteinase BaP1 intradermally injected. This result is not observed when both BaP1 and this protein are injected simultaneously. The polypeptide is Snaclec aspercetin subunit beta (Bothrops asper (Terciopelo)).